A 384-amino-acid chain; its full sequence is Bifunctional enzyme IspD/IspF (384 aa).

The segment at 1–226 (MAKTVVLVVA…RCLFDGPGEV (226 aa)) is 2-C-methyl-D-erythritol 4-phosphate cytidylyltransferase. The segment at 227–384 (RSASGYDVHR…QAMASVWLPR (158 aa)) is 2-C-methyl-D-erythritol 2,4-cyclodiphosphate synthase. 2 residues coordinate a divalent metal cation: Asp-233 and His-235. Residues 233–235 (DVH) and 260–261 (HS) each bind 4-CDP-2-C-methyl-D-erythritol 2-phosphate. An a divalent metal cation-binding site is contributed by His-268. 4-CDP-2-C-methyl-D-erythritol 2-phosphate-binding positions include 282 to 284 (DIG), 358 to 361 (TTTE), Phe-365, and Arg-368.

It in the N-terminal section; belongs to the IspD/TarI cytidylyltransferase family. IspD subfamily. This sequence in the C-terminal section; belongs to the IspF family. It depends on a divalent metal cation as a cofactor.

The catalysed reaction is 2-C-methyl-D-erythritol 4-phosphate + CTP + H(+) = 4-CDP-2-C-methyl-D-erythritol + diphosphate. It carries out the reaction 4-CDP-2-C-methyl-D-erythritol 2-phosphate = 2-C-methyl-D-erythritol 2,4-cyclic diphosphate + CMP. Its pathway is isoprenoid biosynthesis; isopentenyl diphosphate biosynthesis via DXP pathway; isopentenyl diphosphate from 1-deoxy-D-xylulose 5-phosphate: step 2/6. It participates in isoprenoid biosynthesis; isopentenyl diphosphate biosynthesis via DXP pathway; isopentenyl diphosphate from 1-deoxy-D-xylulose 5-phosphate: step 4/6. In terms of biological role, bifunctional enzyme that catalyzes the formation of 4-diphosphocytidyl-2-C-methyl-D-erythritol from CTP and 2-C-methyl-D-erythritol 4-phosphate (MEP) (IspD), and catalyzes the conversion of 4-diphosphocytidyl-2-C-methyl-D-erythritol 2-phosphate (CDP-ME2P) to 2-C-methyl-D-erythritol 2,4-cyclodiphosphate (ME-CPP) with a corresponding release of cytidine 5-monophosphate (CMP) (IspF). The protein is Bifunctional enzyme IspD/IspF of Paramagnetospirillum magneticum (strain ATCC 700264 / AMB-1) (Magnetospirillum magneticum).